We begin with the raw amino-acid sequence, 501 residues long: Ribose import ATP-binding protein RbsA 1 (501 aa).

ABC transporter domains are found at residues 5 to 241 (LQLK…VGRK) and 252 to 495 (APGD…VGKL). Residue 37 to 44 (GENGAGKS) coordinates ATP.

It belongs to the ABC transporter superfamily. Ribose importer (TC 3.A.1.2.1) family. In terms of assembly, the complex is composed of an ATP-binding protein (RbsA), two transmembrane proteins (RbsC) and a solute-binding protein (RbsB).

The protein resides in the cell inner membrane. The catalysed reaction is D-ribose(out) + ATP + H2O = D-ribose(in) + ADP + phosphate + H(+). Part of the ABC transporter complex RbsABC involved in ribose import. Responsible for energy coupling to the transport system. In Escherichia coli O157:H7, this protein is Ribose import ATP-binding protein RbsA 1.